A 384-amino-acid polypeptide reads, in one-letter code: F-box/kelch-repeat protein At3g44120 (384 aa).

An F-box domain is found at Met1–Lys46. Kelch repeat units lie at residues Cys156–Phe202, Ser264–Asp314, and Gly352–Tyr384.

This is F-box/kelch-repeat protein At3g44120 from Arabidopsis thaliana (Mouse-ear cress).